The following is a 245-amino-acid chain: Thiopurine S-methyltransferase (245 aa).

Ser14 carries the phosphoserine modification. 29 to 40 (WREKWVDGKIGF) serves as a coordination point for S-adenosyl-L-methionine. Phe40 is a substrate binding site. Lys58 carries the post-translational modification N6-acetyllysine. Leu69, Glu90, and Arg152 together coordinate S-adenosyl-L-methionine.

It belongs to the class I-like SAM-binding methyltransferase superfamily. TPMT family. As to quaternary structure, monomer.

It localises to the cytoplasm. It catalyses the reaction S-adenosyl-L-methionine + a thiopurine = S-adenosyl-L-homocysteine + a thiopurine S-methylether.. The sequence is that of Thiopurine S-methyltransferase (TPMT) from Panthera tigris (Tiger).